The primary structure comprises 141 residues: Large ribosomal subunit protein uL23A (141 aa).

A phosphoserine mark is found at serine 68 and serine 70.

This sequence belongs to the universal ribosomal protein uL23 family. As to quaternary structure, component of the large ribosomal subunit (LSU). Mature yeast ribosomes consist of a small (40S) and a large (60S) subunit. The 40S small subunit contains 1 molecule of ribosomal RNA (18S rRNA) and at least 33 different proteins. The large 60S subunit contains 3 rRNA molecules (25S, 5.8S and 5S rRNA) and at least 46 different proteins. uL23 is associated with the polypeptide exit tunnel.

The protein resides in the cytoplasm. Its function is as follows. This protein binds to a specific region on the 26S rRNA. Functionally, component of the ribosome, a large ribonucleoprotein complex responsible for the synthesis of proteins in the cell. The small ribosomal subunit (SSU) binds messenger RNAs (mRNAs) and translates the encoded message by selecting cognate aminoacyl-transfer RNA (tRNA) molecules. The large subunit (LSU) contains the ribosomal catalytic site termed the peptidyl transferase center (PTC), which catalyzes the formation of peptide bonds, thereby polymerizing the amino acids delivered by tRNAs into a polypeptide chain. The nascent polypeptides leave the ribosome through a tunnel in the LSU and interact with protein factors that function in enzymatic processing, targeting, and the membrane insertion of nascent chains at the exit of the ribosomal tunnel. uL23 is a major component of the universal docking site for these factors at the polypeptide exit tunnel. The chain is Large ribosomal subunit protein uL23A (rpl2501) from Schizosaccharomyces pombe (strain 972 / ATCC 24843) (Fission yeast).